The chain runs to 226 residues: ATP-dependent dethiobiotin synthetase BioD (226 aa).

12-17 contributes to the ATP binding site; that stretch reads GVGKTV. T16 is a Mg(2+) binding site. K37 is an active-site residue. T41 lines the substrate pocket. Residues D49, 108-111, 169-170, and 197-199 contribute to the ATP site; these read EGAG, GS, and PAG. Mg(2+) contacts are provided by D49 and E108.

The protein belongs to the dethiobiotin synthetase family. In terms of assembly, homodimer. Mg(2+) serves as cofactor.

It localises to the cytoplasm. The catalysed reaction is (7R,8S)-7,8-diammoniononanoate + CO2 + ATP = (4R,5S)-dethiobiotin + ADP + phosphate + 3 H(+). It functions in the pathway cofactor biosynthesis; biotin biosynthesis; biotin from 7,8-diaminononanoate: step 1/2. Catalyzes a mechanistically unusual reaction, the ATP-dependent insertion of CO2 between the N7 and N8 nitrogen atoms of 7,8-diaminopelargonic acid (DAPA, also called 7,8-diammoniononanoate) to form a ureido ring. The sequence is that of ATP-dependent dethiobiotin synthetase BioD from Mycobacterium tuberculosis (strain ATCC 25177 / H37Ra).